Here is a 416-residue protein sequence, read N- to C-terminus: Enterobactin exporter EntS (416 aa).

Residues Met1 to Ala21 lie on the Cytoplasmic side of the membrane. A helical membrane pass occupies residues Val22–Val42. Residues Gln43–Gly55 lie on the Periplasmic side of the membrane. The helical transmembrane segment at Leu56–Ala76 threads the bilayer. Topologically, residues Asp77–Lys83 are cytoplasmic. Residues Val84–Leu104 traverse the membrane as a helical segment. The Periplasmic segment spans residues Leu105–Ser109. The helical transmembrane segment at Leu110 to Ala130 threads the bilayer. Residues Leu131–Arg156 lie on the Cytoplasmic side of the membrane. A helical transmembrane segment spans residues Leu157 to Trp177. Position 178 (Asn178) is a topological domain, periplasmic. A helical membrane pass occupies residues Tyr179–Leu199. Over Pro200 to Arg218 the chain is Cytoplasmic. The chain crosses the membrane as a helical span at residues Phe219–Ala239. Over Ser240 to Ser256 the chain is Periplasmic. The chain crosses the membrane as a helical span at residues Ala257–Thr277. The Cytoplasmic portion of the chain corresponds to Ser278–Pro287. A helical membrane pass occupies residues Gly288–Leu307. The Periplasmic portion of the chain corresponds to Met308 to Leu313. The chain crosses the membrane as a helical span at residues Gly314–Leu336. Residues Gln337–Asn356 lie on the Cytoplasmic side of the membrane. The helical transmembrane segment at Val357 to Val377 threads the bilayer. A topological domain (periplasmic) is located at residue Ala378. A helical transmembrane segment spans residues Ser379 to Val399. The Cytoplasmic portion of the chain corresponds to Glu400–Ser416.

The protein belongs to the major facilitator superfamily. EntS (TC 2.A.1.38) family.

The protein resides in the cell inner membrane. Functionally, component of an export pathway for enterobactin. The protein is Enterobactin exporter EntS of Escherichia coli O6:H1 (strain CFT073 / ATCC 700928 / UPEC).